The chain runs to 264 residues: Diphthine synthase (264 aa).

S-adenosyl-L-methionine is bound by residues leucine 10, aspartate 87, valine 90, 115 to 116 (SI), leucine 166, alanine 209, and histidine 234.

It belongs to the diphthine synthase family. Homodimer.

It catalyses the reaction 2-[(3S)-amino-3-carboxypropyl]-L-histidyl-[translation elongation factor 2] + 3 S-adenosyl-L-methionine = diphthine-[translation elongation factor 2] + 3 S-adenosyl-L-homocysteine + 3 H(+). The protein operates within protein modification; peptidyl-diphthamide biosynthesis. In terms of biological role, S-adenosyl-L-methionine-dependent methyltransferase that catalyzes the trimethylation of the amino group of the modified target histidine residue in translation elongation factor 2 (EF-2), to form an intermediate called diphthine. The three successive methylation reactions represent the second step of diphthamide biosynthesis. This chain is Diphthine synthase, found in Thermococcus kodakarensis (strain ATCC BAA-918 / JCM 12380 / KOD1) (Pyrococcus kodakaraensis (strain KOD1)).